The following is a 1250-amino-acid chain: TBC1 domain family member 9B (1250 aa).

GRAM domains lie at 142–209 and 288–356; these read LKMR…EKNA and ECYR…EKAD. The residue at position 397 (Thr397) is a Phosphothreonine. Residues 397–443 form a disordered region; that stretch reads TPSKQPGSIGSRKASVVDPSTESSPAPQEGSEQPASPASPLSSRQSF. 4 positions are modified to phosphoserine: Ser411, Ser432, Ser435, and Ser463. Residues 414 to 443 are compositionally biased toward polar residues; the sequence is DPSTESSPAPQEGSEQPASPASPLSSRQSF. In terms of domain architecture, Rab-GAP TBC spans 508–695; the sequence is GIPESLRGEL…VIVDCFFYEG (188 aa). Residues 668–688 form a helical membrane-spanning segment; the sequence is LSWFLTLFLSVMPFESAVVIV. An EF-hand domain is found at 879 to 914; it reads HTPLLAGRMFRLLDENKDSLINFKEFVTGMSGMYHG. 3 disordered regions span residues 974–999, 1069–1093, and 1128–1157; these read LPQEEQEGSGSEERGEEKGTSSPDYR, SARTGRKPRDCATEEDEPPAPELHQ, and VEGGSGEGQGSPSQLLSDDETKDDMSMSSY. A compositionally biased stretch (basic and acidic residues) spans 984–999; sequence SEERGEEKGTSSPDYR. Ser1241 carries the post-translational modification Phosphoserine.

It is found in the membrane. May act as a GTPase-activating protein for Rab family protein(s). The polypeptide is TBC1 domain family member 9B (TBC1D9B) (Homo sapiens (Human)).